We begin with the raw amino-acid sequence, 750 residues long: uncharacterized protein (750 aa).

N-linked (GlcNAc...) asparagine glycans are attached at residues asparagine 61, asparagine 84, asparagine 115, asparagine 154, asparagine 176, asparagine 197, asparagine 207, asparagine 228, asparagine 241, asparagine 267, asparagine 293, asparagine 299, asparagine 312, asparagine 335, asparagine 351, asparagine 373, asparagine 389, and asparagine 519. Phosphoserine occurs at positions 675 and 678. Residue lysine 697 forms a Glycyl lysine isopeptide (Lys-Gly) (interchain with G-Cter in ubiquitin) linkage. Polar residues-rich tracts occupy residues 703 to 726 (EITAIDNSSSANNTDVTGSTSNRT) and 736 to 750 (KDSNGPVNNNAHLVA). A disordered region spans residues 703–750 (EITAIDNSSSANNTDVTGSTSNRTELSHPDVTPKDSNGPVNNNAHLVA). N-linked (GlcNAc...) asparagine glycosylation is found at asparagine 709, asparagine 714, and asparagine 724.

In terms of processing, N-glycosylated.

It localises to the mitochondrion. This is an uncharacterized protein from Saccharomyces cerevisiae (strain ATCC 204508 / S288c) (Baker's yeast).